The following is a 606-amino-acid chain: Gamma-aminobutyric acid receptor subunit beta (606 aa).

Residues Met-1–Val-44 form the signal peptide. Residues Gln-45–Gly-268 are Extracellular-facing. Asn-58 is a glycosylation site (N-linked (GlcNAc...) asparagine). A disulfide bond links Cys-185 and Cys-199. N-linked (GlcNAc...) asparagine glycosylation occurs at Asn-253. 3 helical membrane-spanning segments follow: residues Tyr-269–Leu-291, Pro-297–Ser-316, and Tyr-333–Lys-356. At Arg-357–Lys-568 the chain is on the cytoplasmic side. 2 disordered regions span residues Lys-376–Arg-451 and His-482–Pro-542. Low complexity predominate over residues Gly-381–Val-395. The segment covering Gly-396 to Pro-425 has biased composition (gly residues). A compositionally biased stretch (basic residues) spans Gly-430–Ala-443. Residues Gly-499–Asp-536 show a composition bias toward gly residues. The chain crosses the membrane as a helical span at residues Tyr-569–Leu-590.

Belongs to the ligand-gated ion channel (TC 1.A.9) family. Gamma-aminobutyric acid receptor (TC 1.A.9.5) subfamily. Forms oligomers. Interacts with Nlg4; the interaction mediates Rdl clustering. Interacts with Fbxl4; the interaction mediates Rdl degradation. In terms of tissue distribution, expressed in different parts of the brain: the mushroom bodies (alpha, alpha', beta, beta', gamma lobes and peduncles), the neurons projecting to the columnar-type neuron LC9 optic glomerulus, in interneurons connecting the paired olfactory lobes, antennal lobes, PDF-expressing small and large ventral lateral neurons (LNvs) of the circadian clock and lobula columnar neuron 11 (LC11) (at protein level). Expressed in all major ON pathway medulla neurons (Mi1, Tm3, Mi4, and Mi9) and in OFF pathway neurons (Tm1, Tm2, Tm4, and Tm9).

It is found in the cell membrane. Its subcellular location is the postsynaptic cell membrane. It localises to the cell projection. The protein localises to the dendrite. The protein resides in the axon. With respect to regulation, activated by agonist muscimol. Insensitive to zinc, glycine, glutamate, and baclofen, loreclezole, to antagonist bicuculline, glycine-receptor antagonist strychnine, and nonselective GABA and glycine antagonist RU 5135. Insensitive to flunitrazepam, pentobarbitone or pregnane steroids such as 5alpha-pregnan-3alpha-ol-20-one. Inhibited by insecticides picrotoxin (PTX), cyclodiene dieldrin, TBPS and lindane. Inhibited by ivermectin, fipronil and pyrafluprole. Inhibited by insecticides picrotoxin (PTX). Its function is as follows. Gamma-aminobutyric acid (GABA) receptor voltage channel subunit. GABA, an inhibitory neurotransmitter, mediates neuronal inhibition by binding to the GABA receptor and opening an integral chloride channel. Together with glutamate receptor GluClalpha, plays an important role in the visual response by regulating the activity of ON/OFF-selective neurons. Plays a role in promoting sleep and sleep latency by regulating the activity of peptidergic PDF neurons. In large ventral lateral clock neurons, clustering is mediated by Nlg4 and protein levels undergo daily degradation in response to the circadian clock. In neurons in the mushroom bodies, has a role in odor memory acquisition where it inhibits appetitive and aversive olfactory learning, probably upstream of Adcy1/adenylate cyclase 1 and GTPase activating protein Nf1. In male-specific GABAergic neurons, plays a role in inhibiting male aggressive behavior during courtship. In terms of biological role, gamma-aminobutyric acid (GABA) receptor voltage channel subunit. The protein is Gamma-aminobutyric acid receptor subunit beta (Rdl) of Drosophila melanogaster (Fruit fly).